The following is a 476-amino-acid chain: ATP synthase subunit beta (476 aa).

Glycine 154 to threonine 161 serves as a coordination point for ATP.

Belongs to the ATPase alpha/beta chains family. In terms of assembly, F-type ATPases have 2 components, CF(1) - the catalytic core - and CF(0) - the membrane proton channel. CF(1) has five subunits: alpha(3), beta(3), gamma(1), delta(1), epsilon(1). CF(0) has four main subunits: a(1), b(1), b'(1) and c(9-12).

The protein resides in the cell inner membrane. It catalyses the reaction ATP + H2O + 4 H(+)(in) = ADP + phosphate + 5 H(+)(out). Produces ATP from ADP in the presence of a proton gradient across the membrane. The catalytic sites are hosted primarily by the beta subunits. This chain is ATP synthase subunit beta, found in Rhodopseudomonas palustris (strain BisB5).